The primary structure comprises 239 residues: Uridylate kinase (239 aa).

12 to 15 (KLSG) is a binding site for ATP. The tract at residues 20-25 (GDQGYG) is involved in allosteric activation by GTP. Position 54 (Gly54) interacts with UMP. ATP contacts are provided by Gly55 and Arg59. UMP-binding positions include Asp74 and 135 to 142 (TGNPYFTT). ATP is bound by residues Thr162, Tyr168, and Asp171.

It belongs to the UMP kinase family. In terms of assembly, homohexamer.

It is found in the cytoplasm. The catalysed reaction is UMP + ATP = UDP + ADP. It participates in pyrimidine metabolism; CTP biosynthesis via de novo pathway; UDP from UMP (UMPK route): step 1/1. With respect to regulation, allosterically activated by GTP. Inhibited by UTP. In terms of biological role, catalyzes the reversible phosphorylation of UMP to UDP. The protein is Uridylate kinase of Geobacter metallireducens (strain ATCC 53774 / DSM 7210 / GS-15).